The sequence spans 384 residues: Zinc finger CCCH domain-containing protein 12 (384 aa).

2 disordered regions span residues 1 to 32 and 46 to 81; these read MSHHRRDSGGDVVHVIPTNNPPPDNWFPNLGD and WAMNPDNTSGDNNGPPNKKTRGSPSSSSATTTSAAS. A compositionally biased stretch (polar residues) spans 50–60; it reads PDNTSGDNNGP. Residues 70-81 show a composition bias toward low complexity; that stretch reads SSSSATTTSAAS. 2 C3H1-type zinc fingers span residues 91-118 and 172-200; these read FFKTKLCCKFRAGTCPYITNCNFAHTVE and SFKGRHCKKFYTEEGCPYGESCTFLHDEA. Positions 211 to 231 are disordered; it reads LGPGGYGSGGGGGSGGGSVGG. Residues 212 to 231 show a composition bias toward gly residues; it reads GPGGYGSGGGGGSGGGSVGG. A C3H1-type 3 zinc finger spans residues 260–288; it reads NWKTRICNKWEITGYCPFGAKCHFAHGAA. Residues 299–335 are disordered; that stretch reads EEEGKDGVSPNPDTKQTVQNPKGLSDTTTLLSPGVPH. The segment covering 309-329 has biased composition (polar residues); the sequence is NPDTKQTVQNPKGLSDTTTLL.

In Arabidopsis thaliana (Mouse-ear cress), this protein is Zinc finger CCCH domain-containing protein 12.